Consider the following 251-residue polypeptide: Probable transcriptional regulatory protein MLBr00475 (251 aa).

The protein belongs to the TACO1 family.

The protein localises to the cytoplasm. The chain is Probable transcriptional regulatory protein MLBr00475 from Mycobacterium leprae (strain Br4923).